The following is a 152-amino-acid chain: MRVVVQRAKHAKVTVNGEVVGSIDHGLVLLVGVTHSDTVEDAAFIADKIAHLRIFEDESGKMNLSVLDVGGEILSVSQFTLYGDCRKGRRPNFMEAAKPDRALPIYEAMNEALRQKGIRVETGKFGAMMEVELINDGPVTLIVESKEKAGNK.

Residues 137 to 138 (GP) carry the Gly-cisPro motif, important for rejection of L-amino acids motif.

This sequence belongs to the DTD family. Homodimer.

The protein localises to the cytoplasm. The catalysed reaction is glycyl-tRNA(Ala) + H2O = tRNA(Ala) + glycine + H(+). The enzyme catalyses a D-aminoacyl-tRNA + H2O = a tRNA + a D-alpha-amino acid + H(+). Functionally, an aminoacyl-tRNA editing enzyme that deacylates mischarged D-aminoacyl-tRNAs. Also deacylates mischarged glycyl-tRNA(Ala), protecting cells against glycine mischarging by AlaRS. Acts via tRNA-based rather than protein-based catalysis; rejects L-amino acids rather than detecting D-amino acids in the active site. By recycling D-aminoacyl-tRNA to D-amino acids and free tRNA molecules, this enzyme counteracts the toxicity associated with the formation of D-aminoacyl-tRNA entities in vivo and helps enforce protein L-homochirality. This Geobacillus sp. (strain WCH70) protein is D-aminoacyl-tRNA deacylase.